Here is a 365-residue protein sequence, read N- to C-terminus: DNA replication and repair protein RecF (365 aa).

30-37 (GDNAQGKT) serves as a coordination point for ATP.

The protein belongs to the RecF family.

The protein resides in the cytoplasm. In terms of biological role, the RecF protein is involved in DNA metabolism; it is required for DNA replication and normal SOS inducibility. RecF binds preferentially to single-stranded, linear DNA. It also seems to bind ATP. The protein is DNA replication and repair protein RecF of Alkaliphilus oremlandii (strain OhILAs) (Clostridium oremlandii (strain OhILAs)).